The chain runs to 312 residues: DNA-directed RNA polymerase subunit alpha (312 aa).

Residues 1-226 (MIEFEKPKIT…DHLNLFVDLS (226 aa)) are alpha N-terminal domain (alpha-NTD). The tract at residues 243–312 (TERVLDKIIE…ELGLSLKKRK (70 aa)) is alpha C-terminal domain (alpha-CTD).

Belongs to the RNA polymerase alpha chain family. In terms of assembly, homodimer. The RNAP catalytic core consists of 2 alpha, 1 beta, 1 beta' and 1 omega subunit. When a sigma factor is associated with the core the holoenzyme is formed, which can initiate transcription.

The enzyme catalyses RNA(n) + a ribonucleoside 5'-triphosphate = RNA(n+1) + diphosphate. Functionally, DNA-dependent RNA polymerase catalyzes the transcription of DNA into RNA using the four ribonucleoside triphosphates as substrates. The protein is DNA-directed RNA polymerase subunit alpha of Lactococcus lactis subsp. cremoris (strain SK11).